Consider the following 284-residue polypeptide: Tropomyosin-2 (284 aa).

Positions 1-284 (MDAIKKKMQA…DQTFAELTGY (284 aa)) form a coiled coil. The disordered stretch occupies residues 82-110 (ESEVATQNRKVQQIEEDLEKSEERSTTAQ).

Belongs to the tropomyosin family. In terms of assembly, homodimer.

Its function is as follows. Tropomyosin, in association with the troponin complex, plays a central role in the calcium dependent regulation of muscle contraction. May also regulate motor systems required to maintain nuclear integrity and apico-basal polarity during embryogenesis. In Drosophila melanogaster (Fruit fly), this protein is Tropomyosin-2 (Tm2).